Here is a 668-residue protein sequence, read N- to C-terminus: RING finger protein 214 (668 aa).

2 disordered regions span residues 1 to 87 and 103 to 125; these read MAAS…AHEE and NGSQ…TSLR. At alanine 2 the chain carries N-acetylalanine. Phosphoserine is present on residues serine 15, serine 40, serine 48, and serine 54. The segment covering 43 to 59 has biased composition (polar residues); sequence KQKNLSPPSVSSQMITK. Basic and acidic residues predominate over residues 60-71; that stretch reads ESNRNAHLEHPE. Serine 196 bears the Phosphoserine mark. Residues 220–379 are a coiled coil; that stretch reads QDIEKNLDKM…AEKEAELHLT (160 aa). Residues 486–552 are disordered; it reads FPILNPALSQ…SSETPRPQPV (67 aa). Phosphoserine is present on residues serine 497, serine 511, and serine 516. Pro residues predominate over residues 523 to 536; sequence PHMPPAASIPPPPG. An RING-type; atypical zinc finger spans residues 623-665; that stretch reads CLMCQKLVQPSELHPMACTHALHKECIKFWAQTNTNDTCPFCP.

This Mus musculus (Mouse) protein is RING finger protein 214 (Rnf214).